The chain runs to 348 residues: uncharacterized protein (348 aa).

In terms of biological role, may be involved in apoptosis regulation. This is an uncharacterized protein from Mus musculus (Mouse).